A 265-amino-acid polypeptide reads, in one-letter code: Cytochrome c oxidase subunit 3 (265 aa).

6 consecutive transmembrane segments (helical) span residues 16-36 (PWPISGSLGALATTVGGVMYM), 41-61 (GGATLLSLGLIFLLYTMFVWW), 84-104 (YGSILFIVSEVMFLFAFFWAS), 162-182 (AVYALVATVSLALVSTGFQGM), 200-220 (FFLATGFHGFHVIIGTLFLIV), and 245-265 (WHFVDVVRLFPFVSIYWWGGI).

Belongs to the cytochrome c oxidase subunit 3 family. Component of the cytochrome c oxidase (complex IV, CIV), a multisubunit enzyme composed of a catalytic core of 3 subunits and several supernumerary subunits. The complex exists as a monomer or a dimer and forms supercomplexes (SCs) in the inner mitochondrial membrane with ubiquinol-cytochrome c oxidoreductase (cytochrome b-c1 complex, complex III, CIII).

It localises to the mitochondrion inner membrane. It carries out the reaction 4 Fe(II)-[cytochrome c] + O2 + 8 H(+)(in) = 4 Fe(III)-[cytochrome c] + 2 H2O + 4 H(+)(out). In terms of biological role, component of the cytochrome c oxidase, the last enzyme in the mitochondrial electron transport chain which drives oxidative phosphorylation. The respiratory chain contains 3 multisubunit complexes succinate dehydrogenase (complex II, CII), ubiquinol-cytochrome c oxidoreductase (cytochrome b-c1 complex, complex III, CIII) and cytochrome c oxidase (complex IV, CIV), that cooperate to transfer electrons derived from NADH and succinate to molecular oxygen, creating an electrochemical gradient over the inner membrane that drives transmembrane transport and the ATP synthase. Cytochrome c oxidase is the component of the respiratory chain that catalyzes the reduction of oxygen to water. Electrons originating from reduced cytochrome c in the intermembrane space (IMS) are transferred via the dinuclear copper A center (CU(A)) of subunit 2 and heme A of subunit 1 to the active site in subunit 1, a binuclear center (BNC) formed by heme A3 and copper B (CU(B)). The BNC reduces molecular oxygen to 2 water molecules using 4 electrons from cytochrome c in the IMS and 4 protons from the mitochondrial matrix. The polypeptide is Cytochrome c oxidase subunit 3 (COX3) (Aegilops columnaris (Goatgrass)).